A 215-amino-acid chain; its full sequence is Probable phosphoglycerate mutase GpmB (215 aa).

Substrate is bound by residues 8 to 15 (RHGETQWN), 21 to 22 (QG), Arg58, Arg60, 82 to 85 (ELNM), 104 to 105 (RR), and 151 to 152 (GI). His9 serves as the catalytic Tele-phosphohistidine intermediate. The active-site Proton donor/acceptor is Glu82.

This sequence belongs to the phosphoglycerate mutase family. GpmB subfamily.

It carries out the reaction (2R)-2-phosphoglycerate = (2R)-3-phosphoglycerate. The protein operates within carbohydrate degradation; glycolysis; pyruvate from D-glyceraldehyde 3-phosphate: step 3/5. The polypeptide is Probable phosphoglycerate mutase GpmB (Shigella dysenteriae serotype 1 (strain Sd197)).